The primary structure comprises 421 residues: D-amino acid dehydrogenase (421 aa).

An FAD-binding site is contributed by Val3 to Tyr17.

This sequence belongs to the DadA oxidoreductase family. FAD serves as cofactor.

The catalysed reaction is a D-alpha-amino acid + A + H2O = a 2-oxocarboxylate + AH2 + NH4(+). It participates in amino-acid degradation; D-alanine degradation; NH(3) and pyruvate from D-alanine: step 1/1. Oxidative deamination of D-amino acids. The sequence is that of D-amino acid dehydrogenase from Methylobacterium sp. (strain 4-46).